The chain runs to 201 residues: Large ribosomal subunit protein uL18 (201 aa).

This sequence belongs to the universal ribosomal protein uL18 family. Part of the 50S ribosomal subunit. Contacts the 5S and 23S rRNAs.

Its function is as follows. This is one of the proteins that bind and probably mediate the attachment of the 5S RNA into the large ribosomal subunit, where it forms part of the central protuberance. The chain is Large ribosomal subunit protein uL18 from Thermococcus onnurineus (strain NA1).